Consider the following 374-residue polypeptide: Aminomethyltransferase (374 aa).

This sequence belongs to the GcvT family. The glycine cleavage system is composed of four proteins: P, T, L and H.

The enzyme catalyses N(6)-[(R)-S(8)-aminomethyldihydrolipoyl]-L-lysyl-[protein] + (6S)-5,6,7,8-tetrahydrofolate = N(6)-[(R)-dihydrolipoyl]-L-lysyl-[protein] + (6R)-5,10-methylene-5,6,7,8-tetrahydrofolate + NH4(+). In terms of biological role, the glycine cleavage system catalyzes the degradation of glycine. The sequence is that of Aminomethyltransferase from Prochlorococcus marinus (strain MIT 9303).